The chain runs to 90 residues: Small ribosomal subunit protein uS15 (90 aa).

This sequence belongs to the universal ribosomal protein uS15 family. In terms of assembly, part of the 30S ribosomal subunit. Forms a bridge to the 50S subunit in the 70S ribosome, contacting the 23S rRNA.

Its function is as follows. One of the primary rRNA binding proteins, it binds directly to 16S rRNA where it helps nucleate assembly of the platform of the 30S subunit by binding and bridging several RNA helices of the 16S rRNA. In terms of biological role, forms an intersubunit bridge (bridge B4) with the 23S rRNA of the 50S subunit in the ribosome. This is Small ribosomal subunit protein uS15 from Blochmanniella floridana.